We begin with the raw amino-acid sequence, 331 residues long: Holliday junction branch migration complex subunit RuvB (331 aa).

Residues 1 to 186 are large ATPase domain (RuvB-L); that stretch reads MAKTMMQDRL…FGIVQRLEFY (186 aa). Residues I25, R26, G67, K70, T71, T72, 133–135, R176, Y186, and R223 each bind ATP; that span reads EDF. T71 is a binding site for Mg(2+). The segment at 187–257 is small ATPAse domain (RuvB-S); sequence NIADLTTIVS…IAGSALDMLA (71 aa). The head domain (RuvB-H) stretch occupies residues 260–331; that stretch reads RRGLDHLDRR…LTQMAIDQML (72 aa). Residues R296, R315, and R320 each contribute to the DNA site.

Belongs to the RuvB family. In terms of assembly, homohexamer. Forms an RuvA(8)-RuvB(12)-Holliday junction (HJ) complex. HJ DNA is sandwiched between 2 RuvA tetramers; dsDNA enters through RuvA and exits via RuvB. An RuvB hexamer assembles on each DNA strand where it exits the tetramer. Each RuvB hexamer is contacted by two RuvA subunits (via domain III) on 2 adjacent RuvB subunits; this complex drives branch migration. In the full resolvosome a probable DNA-RuvA(4)-RuvB(12)-RuvC(2) complex forms which resolves the HJ.

The protein localises to the cytoplasm. It catalyses the reaction ATP + H2O = ADP + phosphate + H(+). The RuvA-RuvB-RuvC complex processes Holliday junction (HJ) DNA during genetic recombination and DNA repair, while the RuvA-RuvB complex plays an important role in the rescue of blocked DNA replication forks via replication fork reversal (RFR). RuvA specifically binds to HJ cruciform DNA, conferring on it an open structure. The RuvB hexamer acts as an ATP-dependent pump, pulling dsDNA into and through the RuvAB complex. RuvB forms 2 homohexamers on either side of HJ DNA bound by 1 or 2 RuvA tetramers; 4 subunits per hexamer contact DNA at a time. Coordinated motions by a converter formed by DNA-disengaged RuvB subunits stimulates ATP hydrolysis and nucleotide exchange. Immobilization of the converter enables RuvB to convert the ATP-contained energy into a lever motion, pulling 2 nucleotides of DNA out of the RuvA tetramer per ATP hydrolyzed, thus driving DNA branch migration. The RuvB motors rotate together with the DNA substrate, which together with the progressing nucleotide cycle form the mechanistic basis for DNA recombination by continuous HJ branch migration. Branch migration allows RuvC to scan DNA until it finds its consensus sequence, where it cleaves and resolves cruciform DNA. The polypeptide is Holliday junction branch migration complex subunit RuvB (Psychrobacter cryohalolentis (strain ATCC BAA-1226 / DSM 17306 / VKM B-2378 / K5)).